A 324-amino-acid chain; its full sequence is Beta-ketoacyl-[acyl-carrier-protein] synthase III (324 aa).

Residues C113 and H251 contribute to the active site. Positions 252 to 256 (QANKR) are ACP-binding. N281 is an active-site residue.

The protein belongs to the thiolase-like superfamily. FabH family. As to quaternary structure, homodimer.

It localises to the cytoplasm. It catalyses the reaction malonyl-[ACP] + acetyl-CoA + H(+) = 3-oxobutanoyl-[ACP] + CO2 + CoA. Its pathway is lipid metabolism; fatty acid biosynthesis. Functionally, catalyzes the condensation reaction of fatty acid synthesis by the addition to an acyl acceptor of two carbons from malonyl-ACP. Catalyzes the first condensation reaction which initiates fatty acid synthesis and may therefore play a role in governing the total rate of fatty acid production. Possesses both acetoacetyl-ACP synthase and acetyl transacylase activities. Its substrate specificity determines the biosynthesis of branched-chain and/or straight-chain of fatty acids. This Bartonella bacilliformis (strain ATCC 35685 / KC583 / Herrer 020/F12,63) protein is Beta-ketoacyl-[acyl-carrier-protein] synthase III.